The following is a 336-amino-acid chain: Methionyl-tRNA formyltransferase (336 aa).

110–113 (SLLP) is a (6S)-5,6,7,8-tetrahydrofolate binding site.

It belongs to the Fmt family.

It carries out the reaction L-methionyl-tRNA(fMet) + (6R)-10-formyltetrahydrofolate = N-formyl-L-methionyl-tRNA(fMet) + (6S)-5,6,7,8-tetrahydrofolate + H(+). Functionally, attaches a formyl group to the free amino group of methionyl-tRNA(fMet). The formyl group appears to play a dual role in the initiator identity of N-formylmethionyl-tRNA by promoting its recognition by IF2 and preventing the misappropriation of this tRNA by the elongation apparatus. This Prochlorococcus marinus (strain NATL2A) protein is Methionyl-tRNA formyltransferase.